Here is a 776-residue protein sequence, read N- to C-terminus: Structure-specific endonuclease subunit SLX4 (776 aa).

Positions 201-217 are enriched in acidic residues; that stretch reads EEQMVSDDNSSTEDDTD. Disordered regions lie at residues 201–223, 263–283, and 507–531; these read EEQMVSDDNSSTEDDTDPTQNDG, KSLQRHSQKDSDNGNTIPDQN, and PPLDACSDSGPTGVVSSMPYKKPHS.

Belongs to the SLX4 family. Forms a heterodimer with SLX1. Phosphorylated in response to DNA damage.

The protein localises to the nucleus. Its function is as follows. Regulatory subunit of the SLX1-SLX4 structure-specific endonuclease that resolves DNA secondary structures generated during DNA repair and recombination. Has endonuclease activity towards branched DNA substrates, introducing single-strand cuts in duplex DNA close to junctions with ss-DNA. The polypeptide is Structure-specific endonuclease subunit SLX4 (Candida albicans (strain SC5314 / ATCC MYA-2876) (Yeast)).